The primary structure comprises 4576 residues: Mucin-2 (4576 aa).

A signal peptide spans 1-20 (MGLPLARLVAACLVLALAKG). Serine 21 is subject to Phosphoserine. In terms of domain architecture, VWFD 1 spans 32–205 (HVCSTWGDFH…KINKPEVQCE (174 aa)). 29 disulfide bridges follow: cysteine 34/cysteine 166, cysteine 56/cysteine 204, cysteine 64/cysteine 163, cysteine 216/cysteine 253, cysteine 223/cysteine 248, cysteine 235/cysteine 273, cysteine 255/cysteine 261, cysteine 263/cysteine 289, cysteine 293/cysteine 327, cysteine 306/cysteine 319, cysteine 310/cysteine 349, cysteine 329/cysteine 343, cysteine 351/cysteine 373, cysteine 368/cysteine 385, cysteine 371/cysteine 380, cysteine 389/cysteine 526, cysteine 411/cysteine 561, cysteine 433/cysteine 441, cysteine 572/cysteine 617, cysteine 586/cysteine 612, cysteine 599/cysteine 637, cysteine 619/cysteine 625, cysteine 627/cysteine 652, cysteine 659/cysteine 696, cysteine 672/cysteine 686, cysteine 676/cysteine 716, cysteine 698/cysteine 710, cysteine 718/cysteine 740, and cysteine 738/cysteine 747. Aspartate 46 contacts Ca(2+). The Cu(+) site is built by methionine 143 and methionine 151. Glutamate 153 is a Cu(2+) binding site. Residue asparagine 160 is glycosylated (N-linked (GlcNAc...) asparagine). The Ca(2+) site is built by aspartate 168, asparagine 170, and glutamate 177. A Cu(2+)-binding site is contributed by histidine 275. One can recognise a TIL domain in the interval 293–349 (CPNNMVYLESSSPCVDTCSHLEVSSLCEEHYMDGCFCPEGTVYDDITGSGCIPVSQC). Histidine 322 provides a ligand contact to Cu(2+). Cu(+) is bound at residue methionine 324. The region spanning 387–562 (ETCALEGGSH…NTWKAQSSCH (176 aa)) is the VWFD 2 domain. Aspartate 401 contacts Ca(2+). Residue asparagine 421 is glycosylated (N-linked (GlcNAc...) asparagine). Residues asparagine 528, asparagine 530, leucine 532, aspartate 535, and aspartate 536 each contribute to the Ca(2+) site. Asparagine 668 carries an N-linked (GlcNAc...) asparagine glycan. Asparagine 768 carries an N-linked (GlcNAc...) asparagine glycan. 21 disulfides stabilise this stretch: cysteine 782/cysteine 818, cysteine 800/cysteine 812, cysteine 820/cysteine 843, cysteine 837/cysteine 855, cysteine 841/cysteine 850, cysteine 859/cysteine 990, cysteine 881/cysteine 1025, cysteine 890/cysteine 987, cysteine 907/cysteine 914, cysteine 1035/cysteine 1078, cysteine 1049/cysteine 1073, cysteine 1060/cysteine 1100, cysteine 1080/cysteine 1088, cysteine 1090/cysteine 1115, cysteine 1106/cysteine 1135, cysteine 1119/cysteine 1161, cysteine 1143/cysteine 1185, cysteine 1165/cysteine 1179, cysteine 1187/cysteine 1211, cysteine 1206/cysteine 1236, and cysteine 1209/cysteine 1219. Residue asparagine 838 is glycosylated (N-linked (GlcNAc...) asparagine). Positions 857–1026 (STCSIYGSGH…NSWKEASTCP (170 aa)) constitute a VWFD 3 domain. A Ca(2+)-binding site is contributed by aspartate 871. Asparagine 893 carries N-linked (GlcNAc...) asparagine glycosylation. Positions 992, 994, 999, and 1000 each coordinate Ca(2+). Residues asparagine 1137 and asparagine 1152 are each glycosylated (N-linked (GlcNAc...) asparagine). 3 N-linked (GlcNAc...) asparagine glycosylation sites follow: asparagine 1213, asparagine 1228, and asparagine 1244. Residues threonine 1265, threonine 1268, threonine 1269, threonine 1281, and threonine 1292 are each glycosylated (O-linked (GalNAc) threonine). 5 residues coordinate Ca(2+): asparagine 1305, histidine 1308, glycine 1315, aspartate 1316, and glutamate 1318. A glycan (N-linked (GlcNAc...) asparagine) is linked at asparagine 1352. The Ca(2+) site is built by aspartate 1375 and tyrosine 1376. Tandem repeats lie at residues 1395–1415 (SPTTSTTTLSTTPPTSSPTTL), 1416–1427 (PTSSPVTSSATL), 1428–1437 (PTTSSITSTI), 1438–1453 (SPTTSPTTPLTTSPTT), and 1454–1460 (SPTTSPT). Residues 1395 to 2866 (SPTTSTTTLS…PTTSSTFTTP (1472 aa)) form a disordered region. The stretch at 1478-1497 (PSTTSPTTPSTTPSTTSPTT) is one 7B repeat. Residues 1498-1510 (PSTTSPTTPTSTS) form an 8A repeat. The stretch at 1530–1556 (SPTTSPTTPSTTSPTISTTTSTISPTT) is one 9B repeat. One copy of the 10A repeat lies at 1557–1572 (PSTTSPNTPSTTSSTI). The 10B repeat unit spans residues 1573–1588 (PSTTSPTTPSTTSPTI). An 11A repeat occupies 1589 to 1607 (STTTSTTSPTTPSTTSPTT). The 11B repeat unit spans residues 1608-1634 (PSTTSPTTPSTTSPTISTTTLTTSPTT). 2 tandem repeats follow at residues 1635-1642 (PSTTSPTT) and 1665-1681 (ISPTTPSTTSPTTLSTT). Residues asparagine 2529 and asparagine 2910 are each glycosylated (N-linked (GlcNAc...) asparagine). Low complexity-rich tracts occupy residues 2975–3623 (PSST…GSTP) and 3631–3706 (PGPT…TSPS). The disordered stretch occupies residues 2975–3706 (PSSTTTETPT…SSTSPITSPS (732 aa)). N-linked (GlcNAc...) asparagine glycans are attached at residues asparagine 3734, asparagine 3745, and asparagine 3756. Positions 3764–3774 (STPTPSTPTPT) are enriched in pro residues. The tract at residues 3764–3806 (STPTPSTPTPTPSQTTTPSTTSSKSTPSTPQSTSPKSTLSTPT) is disordered. Residues 3775-3806 (PSQTTTPSTTSSKSTPSTPQSTSPKSTLSTPT) show a composition bias toward low complexity. N-linked (GlcNAc...) asparagine glycosylation is found at asparagine 3823, asparagine 3830, and asparagine 3903. Residues 3880-4063 (CYCTGWGDPH…VNDPSKPHCP (184 aa)) enclose the VWFD 4 domain. Disulfide bonds link cysteine 3882/cysteine 4023, cysteine 3904/cysteine 4062, and cysteine 3928/cysteine 3936. N-linked (GlcNAc...) asparagine glycosylation is found at asparagine 3991, asparagine 4017, asparagine 4028, asparagine 4083, asparagine 4149, asparagine 4183, asparagine 4254, asparagine 4277, asparagine 4351, asparagine 4366, asparagine 4434, asparagine 4465, and asparagine 4488. VWFC domains are found at residues 4213 to 4282 (CVGP…TSCK) and 4320 to 4387 (GVCV…KKCQ). 4 cysteine pairs are disulfide-bonded: cysteine 4471–cysteine 4518, cysteine 4485–cysteine 4532, cysteine 4494–cysteine 4548, and cysteine 4498–cysteine 4550. The region spanning 4471-4556 (CSAVSVMKEI…SCLCQDTVCG (86 aa)) is the CTCK domain.

Homomultimer; disulfide-linked. The N- and C-terminus mediate their assembly into higher order structures to form filaments. The CTCK domains of two polypeptides associate in the endoplasmic reticulum to generate intermolecularly disulfide-bonded dimers. These dimers progress to the Golgi apparatus, which is a more acidic environment than the endoplasmic reticulum. Under acidic conditions, the N-termini form non-covalent intermolecular interactions that juxtapose assemblies of the third VWD domain (VWD3) from different CTCK-linked dimers. The VWD3 assemblies then become disulfide bonded to one another to produce long, disulfide-linked polymers that remain highly compact until secretion. Interacts with FCGBP. Interacts with AGR2; disulfide-linked. O-glycosylated. O-glycosylation is required for mucin assembly. Goblet cells synthesize two forms of mucin that differ in branched chain O-glycosylation and the site of production in the colon. In terms of processing, may undergo proteolytic cleavage in the outer mucus layer of the colon, contributing to the expanded volume and loose nature of this layer which allows for bacterial colonization in contrast to the inner mucus layer which is dense and devoid of bacteria. Post-translationally, at low pH of 6 and under, undergoes autocatalytic cleavage in vitro in the N-terminal region of the fourth VWD domain. It is likely that this also occurs in vivo and is triggered by the low pH of the late secretory pathway. In terms of tissue distribution, highly expressed in goblet cells of the colon with lower levels in the small intestine and no expression in the stomach (at protein level).

It localises to the secreted. Its function is as follows. Coats the epithelia of the intestines and other mucus membrane-containing organs to provide a protective, lubricating barrier against particles and infectious agents at mucosal surfaces. Major constituent of the colon mucus, which is mainly formed by large polymeric networks of MUC2 secreted by goblet cells that cover the exposed surfaces of intestine. MUC2 networks form hydrogels that guard the underlying epithelium from pathogens and other hazardous matter entering from the outside world, while permitting nutrient absorption and gas exchange. Acts as a divalent copper chaperone that protects intestinal cells from copper toxicity and facilitates nutritional copper unptake into cells. Binds both Cu(2+) and its reduced form, Cu(1+), at two juxtaposed binding sites: Cu(2+), once reduced to Cu(1+) by vitamin C (ascorbate) or other dietary antioxidants, transits to the other binding site. MUC2-bound Cu(1+) is protected from oxidation in aerobic environments, and can be released for nutritional delivery to cells. Mucin gels store antimicrobial molecules that participate in innate immunity. Mucin glycoproteins also house and feed the microbiome, lubricate tissue surfaces, and may facilitate the removal of contaminants and waste products from the body. Goblet cells synthesize two forms of MUC2 mucin that differ in branched chain O-glycosylation and the site of production in the colon: a (1) 'thick' mucus that wraps the microbiota to form fecal pellets is produced in the proximal, ascending colon. 'Thick' mucus transits along the descending colon and is lubricated by a (2) 'thin' MUC2 mucus produced in the distal colon which adheres to the 'thick' mucus. This chain is Mucin-2, found in Mus musculus (Mouse).